A 268-amino-acid polypeptide reads, in one-letter code: Phosphatidylcholine synthase (268 aa).

Residues 1 to 27 are Cytoplasmic-facing; sequence MAARKAAKKLTDRIPRPKKKVTWPQAR. Residues 28–48 form a helical membrane-spanning segment; that stretch reads AFSVHLLTASGSFLAFLSLVA. Topologically, residues 49–53 are periplasmic; the sequence is ASEER. A helical membrane pass occupies residues 54-74; it reads WTAMFWWLGLALFVDGIDGPI. The Cytoplasmic portion of the chain corresponds to 75–88; sequence ARKLEVKEILPTWS. The helical transmembrane segment at 89 to 109 threads the bilayer; the sequence is GELLDNIIDYVTYVLIPAFAL. Topologically, residues 110 to 112 are periplasmic; that stretch reads YQR. The chain crosses the membrane as a helical span at residues 113-133; the sequence is GFMGEGLSFLSAAIIVVSSAI. The Cytoplasmic portion of the chain corresponds to 134-145; that stretch reads YYADTGMKTKEN. Residues 146–166 form a helical membrane-spanning segment; it reads FFKGFPVVWNMVVFTLFVIEP. Residues 167–168 lie on the Periplasmic side of the membrane; it reads GQ. The helical transmembrane segment at 169 to 189 threads the bilayer; sequence WVSFAVVVVAGILTFVPINFI. At 190-203 the chain is on the cytoplasmic side; sequence HPVRVVRLRPFNLT. The chain crosses the membrane as a helical span at residues 204 to 224; the sequence is MTLLWCAFGALALAQAALAAF. Residues 225–240 lie on the Periplasmic side of the membrane; that stretch reads YDQIGVLGAQVSTFIK. The chain crosses the membrane as a helical span at residues 241-261; the sequence is IGITITGLYLACIGGIMQFFP. At 262–268 the chain is on the cytoplasmic side; sequence NLGAKKA.

It belongs to the CDP-alcohol phosphatidyltransferase class-I family. Requires Mn(2+) as cofactor.

Its subcellular location is the cell inner membrane. The enzyme catalyses a CDP-1,2-diacyl-sn-glycerol + choline = a 1,2-diacyl-sn-glycero-3-phosphocholine + CMP + H(+). Condenses choline with CDP-diglyceride to produce phosphatidylcholine and CMP. The protein is Phosphatidylcholine synthase (pcs) of Mesorhizobium japonicum (strain LMG 29417 / CECT 9101 / MAFF 303099) (Mesorhizobium loti (strain MAFF 303099)).